The chain runs to 205 residues: Small ribosomal subunit protein uS4 (205 aa).

In terms of domain architecture, S4 RNA-binding spans 110 to 172 (RRLQTIIYRK…VGSPITKEKL (63 aa)). Residues 173–205 (MAKPQPASAPKAAAAPKAAAAPAEAAAAPKKEE) are disordered. The span at 174–205 (AKPQPASAPKAAAAPKAAAAPAEAAAAPKKEE) shows a compositional bias: low complexity.

Belongs to the universal ribosomal protein uS4 family. Part of the 30S ribosomal subunit. Contacts protein S5. The interaction surface between S4 and S5 is involved in control of translational fidelity.

In terms of biological role, one of the primary rRNA binding proteins, it binds directly to 16S rRNA where it nucleates assembly of the body of the 30S subunit. With S5 and S12 plays an important role in translational accuracy. The chain is Small ribosomal subunit protein uS4 from Methanocella arvoryzae (strain DSM 22066 / NBRC 105507 / MRE50).